Reading from the N-terminus, the 599-residue chain is Histone-arginine methyltransferase CARMER (599 aa).

The SAM-dependent MTase PRMT-type domain occupies 127–434 (ASQYFQFYGY…QRQSYDVEID (308 aa)). 6 residues coordinate S-adenosyl-L-methionine: glutamine 140, arginine 149, glycine 173, glutamate 195, glutamate 224, and threonine 252. Arginine 487 bears the Asymmetric dimethylarginine; by autocatalysis mark.

It belongs to the class I-like SAM-binding methyltransferase superfamily. Protein arginine N-methyltransferase family. Homodimer. In terms of processing, the dimethylated protein is the major form.

Its subcellular location is the cytoplasm. The protein resides in the nucleus. It carries out the reaction L-arginyl-[protein] + 2 S-adenosyl-L-methionine = N(omega),N(omega)-dimethyl-L-arginyl-[protein] + 2 S-adenosyl-L-homocysteine + 2 H(+). Its function is as follows. Methylates (mono- and asymmetric dimethylation) the guanidino nitrogens of arginyl residues in proteins. May methylate histone H3 at 'Arg-17' and activate transcription via chromatin remodeling. The chain is Histone-arginine methyltransferase CARMER (Art4) from Culex quinquefasciatus (Southern house mosquito).